A 466-amino-acid chain; its full sequence is Cysteine--tRNA ligase (466 aa).

C28 contributes to the Zn(2+) binding site. Residues 30–40 (PTVYNYIHIGN) carry the 'HIGH' region motif. Positions 208, 233, and 237 each coordinate Zn(2+). The short motif at 265 to 269 (KMSKS) is the 'KMSKS' region element. An ATP-binding site is contributed by K268.

The protein belongs to the class-I aminoacyl-tRNA synthetase family. In terms of assembly, monomer. Requires Zn(2+) as cofactor.

Its subcellular location is the cytoplasm. It catalyses the reaction tRNA(Cys) + L-cysteine + ATP = L-cysteinyl-tRNA(Cys) + AMP + diphosphate. In Staphylococcus aureus (strain MRSA252), this protein is Cysteine--tRNA ligase.